A 49-amino-acid polypeptide reads, in one-letter code: Small, acid-soluble spore protein O (49 aa).

The interval 24 to 49 is disordered; the sequence is GYNEEFSNEPLTEAQRQNNKKRKKNQ.

Belongs to the SspO family.

It localises to the spore core. The sequence is that of Small, acid-soluble spore protein O from Geobacillus kaustophilus (strain HTA426).